We begin with the raw amino-acid sequence, 336 residues long: DNA-directed RNA polymerase subunit alpha (336 aa).

The tract at residues 1–232 (MIQKNWQELI…DQLGLFVNFE (232 aa)) is alpha N-terminal domain (alpha-NTD). Residues 248–336 (FNPALLKKVD…ELAKRYEDQY (89 aa)) are alpha C-terminal domain (alpha-CTD).

This sequence belongs to the RNA polymerase alpha chain family. Homodimer. The RNAP catalytic core consists of 2 alpha, 1 beta, 1 beta' and 1 omega subunit. When a sigma factor is associated with the core the holoenzyme is formed, which can initiate transcription.

It carries out the reaction RNA(n) + a ribonucleoside 5'-triphosphate = RNA(n+1) + diphosphate. In terms of biological role, DNA-dependent RNA polymerase catalyzes the transcription of DNA into RNA using the four ribonucleoside triphosphates as substrates. This is DNA-directed RNA polymerase subunit alpha from Chelativorans sp. (strain BNC1).